Consider the following 259-residue polypeptide: Phospholipase YtpA (259 aa).

S88 (nucleophile) is an active-site residue. Catalysis depends on charge relay system residues D206 and H236.

It belongs to the AB hydrolase superfamily.

It participates in antibiotic biosynthesis; bacilysocin biosynthesis. Its function is as follows. Phospholipase involved in the biosynthesis of the antibiotic bacilysocin. It probably catalyzes the hydrolysis of the 2-sn-acyl moiety of phosphatidylglycerol to produce bacilysocin (lysophosphatidylglycerol). Is also able to catalyze the hydrolysis reaction of one acyl bond in phosphatidylcholine in vitro (actual cleavage point is unknown), resulting in lysophosphatidylcholine. In Bacillus subtilis (strain 168), this protein is Phospholipase YtpA (ytpA).